Consider the following 301-residue polypeptide: Ribonuclease HIII (301 aa).

The RNase H type-2 domain maps to 90–301 (TPHIGIDESG…LDAILGKVGK (212 aa)). Asp-96, Glu-97, and Asp-198 together coordinate a divalent metal cation.

This sequence belongs to the RNase HII family. RnhC subfamily. The cofactor is Mn(2+). Requires Mg(2+) as cofactor.

Its subcellular location is the cytoplasm. The catalysed reaction is Endonucleolytic cleavage to 5'-phosphomonoester.. Endonuclease that specifically degrades the RNA of RNA-DNA hybrids. In Protochlamydia amoebophila (strain UWE25), this protein is Ribonuclease HIII.